The following is a 319-amino-acid chain: ATP-dependent 6-phosphofructokinase (319 aa).

Gly11 serves as a coordination point for ATP. 21–25 (RAVVR) contributes to the ADP binding site. ATP contacts are provided by residues 72 to 73 (RC) and 102 to 105 (GDGS). Mg(2+) is bound at residue Asp103. 125–127 (TID) contributes to the substrate binding site. Asp127 functions as the Proton acceptor in the catalytic mechanism. Arg154 contributes to the ADP binding site. Substrate is bound by residues Arg162 and 169–171 (MGR). ADP-binding positions include 185 to 187 (GAE), Arg211, and 213 to 215 (KKH). Residues Glu222, Arg243, and 249-252 (HMQR) contribute to the substrate site.

The protein belongs to the phosphofructokinase type A (PFKA) family. ATP-dependent PFK group I subfamily. Prokaryotic clade 'B1' sub-subfamily. Homotetramer. The cofactor is Mg(2+).

It is found in the cytoplasm. It catalyses the reaction beta-D-fructose 6-phosphate + ATP = beta-D-fructose 1,6-bisphosphate + ADP + H(+). It functions in the pathway carbohydrate degradation; glycolysis; D-glyceraldehyde 3-phosphate and glycerone phosphate from D-glucose: step 3/4. Allosterically activated by ADP and other diphosphonucleosides, and allosterically inhibited by phosphoenolpyruvate. Its function is as follows. Catalyzes the phosphorylation of D-fructose 6-phosphate to fructose 1,6-bisphosphate by ATP, the first committing step of glycolysis. In Macrococcus caseolyticus (strain JCSC5402) (Macrococcoides caseolyticum), this protein is ATP-dependent 6-phosphofructokinase.